Here is a 285-residue protein sequence, read N- to C-terminus: 1-acyl-sn-glycerol-3-phosphate acyltransferase alpha (285 aa).

The signal sequence occupies residues 1–28 (MELWPGAWTALLLLLLLLLSTLWFCSSS). The Lumenal segment spans residues 29 to 34 (AKYFFK). A helical membrane pass occupies residues 35–55 (MAFYNGWILFLAILAIPVCAV). Topologically, residues 56–124 (RGRNVENMKI…PDRCVPIAKR (69 aa)) are cytoplasmic. The short motif at 101–106 (HQSSLD) is the HXXXXD motif element. The chain crosses the membrane as a helical span at residues 125 to 145 (ELLWAGSAGLACWLAGIIFID). Residues 146–189 (RKRTGDAISVMSEVAQTLLTQDVRVWVFPEGTRNHNGSMLPFKR) lie on the Lumenal side of the membrane. The short motif at 175-178 (EGTR) is the EGTR motif element.

This sequence belongs to the 1-acyl-sn-glycerol-3-phosphate acyltransferase family. Widely expressed.

It is found in the endoplasmic reticulum membrane. The catalysed reaction is a 1-acyl-sn-glycero-3-phosphate + an acyl-CoA = a 1,2-diacyl-sn-glycero-3-phosphate + CoA. It catalyses the reaction 1-(9Z-octadecenoyl)-sn-glycero-3-phosphate + (9Z)-octadecenoyl-CoA = 1,2-di-(9Z-octadecenoyl)-sn-glycero-3-phosphate + CoA. It carries out the reaction 1-(9Z-octadecenoyl)-sn-glycero-3-phosphate + hexadecanoyl-CoA = 1-(9Z)-octadecenoyl-2-hexadecanoyl-sn-glycero-3-phosphate + CoA. The enzyme catalyses heptadecanoyl-CoA + 1-(9Z-octadecenoyl)-sn-glycero-3-phosphate = 1-(9Z)-octadecenoyl-2-heptadecanoyl-sn-glycero-3-phosphate + CoA. The catalysed reaction is 1-(9Z-octadecenoyl)-sn-glycero-3-phosphate + octadecanoyl-CoA = 1-(9Z-octadecenoyl)-2-octadecanoyl-sn-glycero-3-phosphate + CoA. It catalyses the reaction 1-(9Z-octadecenoyl)-sn-glycero-3-phosphate + (9Z,12Z)-octadecadienoyl-CoA = 1-(9Z)-octadecenoyl-2-(9Z,12Z)-octadecadienoyl-sn-glycero-3-phosphate + CoA. It carries out the reaction 1-(9Z-octadecenoyl)-sn-glycero-3-phosphate + tetradecanoyl-CoA = 1-(9Z)-octadecenoyl-2-tetradecanoyl-sn-glycero-3-phosphate + CoA. The enzyme catalyses pentadecanoyl-CoA + 1-(9Z-octadecenoyl)-sn-glycero-3-phosphate = 1-(9Z)-octadecenoyl-2-pentadecanoyl-sn-glycero-3-phosphate + CoA. The catalysed reaction is 1-hexadecanoyl-sn-glycero-3-phosphate + (9Z)-octadecenoyl-CoA = 1-hexadecanoyl-2-(9Z-octadecenoyl)-sn-glycero-3-phosphate + CoA. It catalyses the reaction 1-(9Z,12Z,15Z)-octadecatrienoyl-sn-glycero-3-phosphate + (9Z)-octadecenoyl-CoA = 1-(9Z,12Z,15Z)-octadecatrienoyl-2-(9Z)-octadecenoyl-sn-glycero-3-phosphate + CoA. It carries out the reaction 1-(6Z,9Z,12Z-octadecatrienoyl)-sn-glycero-3-phosphate + (9Z)-octadecenoyl-CoA = (6Z,9Z,12Z)-octadecatrienoyl-2-(9Z)-octadecenoyl-sn-glycero-3-phosphate + CoA. The enzyme catalyses 1-eicosanoyl-sn-glycero-3-phosphate + (9Z)-octadecenoyl-CoA = 1-eicosanoyl-2-(9Z)-octadecenoyl-sn-glycero-3-phosphate + CoA. The catalysed reaction is 1-tetradecanoyl-sn-glycerol 3-phosphate + (9Z)-octadecenoyl-CoA = 1-tetradecanoyl-2-(9Z)-octadecenoyl-sn-glycero-3-phosphate + CoA. It catalyses the reaction 1-(9Z-octadecenoyl)-sn-glycero-3-phosphate + (5Z,8Z,11Z,14Z)-eicosatetraenoyl-CoA = 1-(9Z)-octadecenoyl-2-(5Z,8Z,11Z,14Z)-eicosatetraenoyl-sn-glycero-3-phosphate + CoA. It carries out the reaction 1-(9Z-octadecenoyl)-sn-glycero-3-phosphate + dodecanoyl-CoA = 1-(9Z)-octadecenoyl-2-dodecanoyl-sn-glycero-3-phosphate + CoA. The enzyme catalyses (6Z)-octadecenoyl-CoA + 1-(9Z-octadecenoyl)-sn-glycero-3-phosphate = 1-(9Z)-octadecenoyl-2-(6Z)-octadecenoyl-sn-glycero-3-phosphate + CoA. The catalysed reaction is (11Z)-octadecenoyl-CoA + 1-(9Z-octadecenoyl)-sn-glycero-3-phosphate = 1-(9Z)-octadecenoyl-2-(11Z)-octadecenoyl-sn-glycero-3-phosphate + CoA. It catalyses the reaction (9Z)-hexadecenoyl-CoA + 1-(9Z-octadecenoyl)-sn-glycero-3-phosphate = 1-(9Z-octadecenoyl)-2-(9Z-hexadecenoyl)-sn-glycero-3-phosphate + CoA. It functions in the pathway phospholipid metabolism; CDP-diacylglycerol biosynthesis; CDP-diacylglycerol from sn-glycerol 3-phosphate: step 2/3. Its function is as follows. Converts 1-acyl-sn-glycerol-3-phosphate (lysophosphatidic acid or LPA) into 1,2-diacyl-sn-glycerol-3-phosphate (phosphatidic acid or PA) by incorporating an acyl moiety at the sn-2 position of the glycerol backbone. In Mus musculus (Mouse), this protein is 1-acyl-sn-glycerol-3-phosphate acyltransferase alpha (Agpat1).